The sequence spans 106 residues: UPF0145 protein TM_0763 (106 aa).

Belongs to the UPF0145 family.

This chain is UPF0145 protein TM_0763, found in Thermotoga maritima (strain ATCC 43589 / DSM 3109 / JCM 10099 / NBRC 100826 / MSB8).